A 231-amino-acid polypeptide reads, in one-letter code: Large ribosomal subunit protein uL1 (231 aa).

This sequence belongs to the universal ribosomal protein uL1 family. In terms of assembly, part of the 50S ribosomal subunit.

Its function is as follows. Binds directly to 23S rRNA. The L1 stalk is quite mobile in the ribosome, and is involved in E site tRNA release. In terms of biological role, protein L1 is also a translational repressor protein, it controls the translation of the L11 operon by binding to its mRNA. The sequence is that of Large ribosomal subunit protein uL1 from Moorella thermoacetica (strain ATCC 39073 / JCM 9320).